Consider the following 240-residue polypeptide: Methylthioribulose-1-phosphate dehydratase (240 aa).

Cysteine 100 is a binding site for substrate. The Zn(2+) site is built by histidine 117 and histidine 119. Residue glutamate 146 is the Proton donor/acceptor of the active site. Histidine 202 serves as a coordination point for Zn(2+).

This sequence belongs to the aldolase class II family. MtnB subfamily. It depends on Zn(2+) as a cofactor.

The protein localises to the cytoplasm. It catalyses the reaction 5-(methylsulfanyl)-D-ribulose 1-phosphate = 5-methylsulfanyl-2,3-dioxopentyl phosphate + H2O. It participates in amino-acid biosynthesis; L-methionine biosynthesis via salvage pathway; L-methionine from S-methyl-5-thio-alpha-D-ribose 1-phosphate: step 2/6. Functionally, catalyzes the dehydration of methylthioribulose-1-phosphate (MTRu-1-P) into 2,3-diketo-5-methylthiopentyl-1-phosphate (DK-MTP-1-P). This Emericella nidulans (strain FGSC A4 / ATCC 38163 / CBS 112.46 / NRRL 194 / M139) (Aspergillus nidulans) protein is Methylthioribulose-1-phosphate dehydratase.